The sequence spans 382 residues: Polyadenylate-binding protein 5 (382 aa).

RRM domains lie at 18 to 96 (AALY…WSQP), 106 to 182 (GNIF…RFKF), 199 to 276 (TNVF…RAQK), and 302 to 378 (VPIY…LGQA).

It localises to the cytoplasm. Binds the poly(A) tail of mRNA. May be involved in cytoplasmic regulatory processes of mRNA metabolism. Can probably bind to cytoplasmic RNA sequences other than poly(A) in vivo. The polypeptide is Polyadenylate-binding protein 5 (PABPC5) (Macaca mulatta (Rhesus macaque)).